We begin with the raw amino-acid sequence, 99 residues long: Nucleoid-associated protein str1598 (99 aa).

It belongs to the YbaB/EbfC family. As to quaternary structure, homodimer.

It localises to the cytoplasm. The protein resides in the nucleoid. Its function is as follows. Binds to DNA and alters its conformation. May be involved in regulation of gene expression, nucleoid organization and DNA protection. This chain is Nucleoid-associated protein str1598, found in Streptococcus thermophilus (strain CNRZ 1066).